Here is a 337-residue protein sequence, read N- to C-terminus: GTP 3',8-cyclase (337 aa).

One can recognise a Radical SAM core domain in the interval 17–243 (PFQRQYYYLR…HKSHTDGPAK (227 aa)). A GTP-binding site is contributed by Arg26. The [4Fe-4S] cluster site is built by Cys33 and Cys37. Residue Tyr39 participates in S-adenosyl-L-methionine binding. Cys40 contributes to the [4Fe-4S] cluster binding site. Residue Arg76 coordinates GTP. Residue Gly80 participates in S-adenosyl-L-methionine binding. Residue Thr107 participates in GTP binding. Ser131 is an S-adenosyl-L-methionine binding site. A GTP-binding site is contributed by Lys168. Residue Met202 coordinates S-adenosyl-L-methionine. Cys265 and Cys268 together coordinate [4Fe-4S] cluster. Residue 270 to 272 (RLR) participates in GTP binding. Cys282 lines the [4Fe-4S] cluster pocket.

It belongs to the radical SAM superfamily. MoaA family. As to quaternary structure, monomer and homodimer. [4Fe-4S] cluster is required as a cofactor.

It carries out the reaction GTP + AH2 + S-adenosyl-L-methionine = (8S)-3',8-cyclo-7,8-dihydroguanosine 5'-triphosphate + 5'-deoxyadenosine + L-methionine + A + H(+). It participates in cofactor biosynthesis; molybdopterin biosynthesis. In terms of biological role, catalyzes the cyclization of GTP to (8S)-3',8-cyclo-7,8-dihydroguanosine 5'-triphosphate. This Haemophilus influenzae (strain PittEE) protein is GTP 3',8-cyclase.